Consider the following 156-residue polypeptide: Lipoprotein signal peptidase (156 aa).

The next 2 helical transmembrane spans lie at isoleucine 52–valine 72 and phenylalanine 85–phenylalanine 105. Active-site residues include aspartate 111 and aspartate 129. Residues asparagine 121–leucine 141 traverse the membrane as a helical segment.

This sequence belongs to the peptidase A8 family.

Its subcellular location is the cell membrane. It catalyses the reaction Release of signal peptides from bacterial membrane prolipoproteins. Hydrolyzes -Xaa-Yaa-Zaa-|-(S,diacylglyceryl)Cys-, in which Xaa is hydrophobic (preferably Leu), and Yaa (Ala or Ser) and Zaa (Gly or Ala) have small, neutral side chains.. It participates in protein modification; lipoprotein biosynthesis (signal peptide cleavage). In terms of biological role, this protein specifically catalyzes the removal of signal peptides from prolipoproteins. This Halalkalibacterium halodurans (strain ATCC BAA-125 / DSM 18197 / FERM 7344 / JCM 9153 / C-125) (Bacillus halodurans) protein is Lipoprotein signal peptidase.